The chain runs to 167 residues: MPRSQRNDNFIDKTFTVVADILLKVLPTSQREKRAFAYYRDGMSAQSEGEYAEALQNYYEAMRLEVDAYDRSYILYNIGLIHTSNGEHARALEYYYQALERNPSLPSALNNIAVIYHYRGEQAIEKGQAEISSLLFDKAADYWKEAIRLAPTNYIEAQNWLKMTGRA.

3 TPR repeats span residues 35–68 (AFAY…EVDA), 72–105 (SYIL…NPSL), and 120–153 (GEQA…APTN).

Belongs to the Ycf3 family.

The protein resides in the plastid. It is found in the chloroplast thylakoid membrane. Functionally, essential for the assembly of the photosystem I (PSI) complex. May act as a chaperone-like factor to guide the assembly of the PSI subunits. The chain is Photosystem I assembly protein Ycf3 from Stigeoclonium helveticum (Green alga).